Here is a 968-residue protein sequence, read N- to C-terminus: Angiomotin-like protein 1 (968 aa).

2 stretches are compositionally biased toward polar residues: residues 152–164 (VYQSARQEPQGQE) and 177–187 (RSTQPQQNNEE). The interval 152–258 (VYQSARQEPQ…NRANSGQAHK (107 aa)) is disordered. Positions 203–224 (GQQQQQQQQQQQQQQQQQQGQG) are enriched in low complexity. Residues Ser253, Ser281, and Ser307 each carry the phosphoserine modification. Residues 271 to 291 (RSLSERIMQLSLERNGAKQHL) adopt a coiled-coil conformation. Residues 285–343 (NGAKQHLPSSGNGKSFKAGGEPSPAQPVCKALDPRGPPPEYPFKTKPMKSPVSKNQDHG) form a disordered region. 2 coiled-coil regions span residues 449-645 (VERA…RRLR) and 676-705 (ALMELVREKEERILALEADMTKWEQKYLEE). The tract at residues 721–742 (AERDTTISNHSRNGSYGESSLE) is disordered. Residues 726–738 (TISNHSRNGSYGE) are compositionally biased toward polar residues. Ser731 bears the Phosphoserine mark. Positions 748–773 (EEEEVVQANRRCQDMEYTIKNLHAKI) form a coiled coil. Residues 785–834 (QRSRKDAGKTDSASLRPARSVPSIAAATGTHSRQTSLTSSQLTEEKKEEK) are disordered. A phosphoserine mark is found at Ser804, Ser816, and Ser840. Low complexity predominate over residues 853 to 878 (ASAPLLPTTPASALSLPASTTSASST). Residues 853–956 (ASAPLLPTTP…GRVSNLLHKP (104 aa)) form a disordered region. Phosphoserine occurs at positions 912 and 918. The PDZ-binding signature appears at 965–968 (EVLI).

Belongs to the angiomotin family. Polyubiquitinated by NEDD4, leading to proteasomal degradation. As to expression, expressed in exocrine glands, including pancreas, submandibular gland, lacrimal gland, parotid gland and sublingual gland (at protein level).

It localises to the cell junction. The protein resides in the tight junction. Inhibits the Wnt/beta-catenin signaling pathway, probably by recruiting CTNNB1 to recycling endosomes and hence preventing its translocation to the nucleus. This Mus musculus (Mouse) protein is Angiomotin-like protein 1 (Amotl1).